Consider the following 158-residue polypeptide: SsrA-binding protein (158 aa).

The segment at K133–A158 is disordered. Positions D136–A158 are enriched in basic and acidic residues.

It belongs to the SmpB family.

The protein resides in the cytoplasm. Functionally, required for rescue of stalled ribosomes mediated by trans-translation. Binds to transfer-messenger RNA (tmRNA), required for stable association of tmRNA with ribosomes. tmRNA and SmpB together mimic tRNA shape, replacing the anticodon stem-loop with SmpB. tmRNA is encoded by the ssrA gene; the 2 termini fold to resemble tRNA(Ala) and it encodes a 'tag peptide', a short internal open reading frame. During trans-translation Ala-aminoacylated tmRNA acts like a tRNA, entering the A-site of stalled ribosomes, displacing the stalled mRNA. The ribosome then switches to translate the ORF on the tmRNA; the nascent peptide is terminated with the 'tag peptide' encoded by the tmRNA and targeted for degradation. The ribosome is freed to recommence translation, which seems to be the essential function of trans-translation. This is SsrA-binding protein from Ruegeria pomeroyi (strain ATCC 700808 / DSM 15171 / DSS-3) (Silicibacter pomeroyi).